The primary structure comprises 182 residues: MDIDPYKEFGATVELLSFLPADFFPSVRDLLDTASALYREALESSDHCSPHHTALRQTVLCWGELMSLASWVGTNLEDPAARELVVSYVNDNMGLKVRQLLWFHISCLTFGRETVLEYLVSFWVWIRTPPAYRPPNAPILSTLPETTVVRRRRPSGRRTPSPRRRRSQSPRRRRSQSPASSC.

Residues 136–182 are disordered; that stretch reads NAPILSTLPETTVVRRRRPSGRRTPSPRRRRSQSPRRRRSQSPASSC. A compositionally biased stretch (basic residues) spans 149-175; the sequence is VRRRRPSGRRTPSPRRRRSQSPRRRRS. The Bipartite nuclear localization signal motif lies at 157–174; that stretch reads RRTPSPRRRRSQSPRRRR. 2 positions are modified to phosphoserine; by host: Ser161 and Ser169. 2 consecutive repeat copies span residues 161–168 and 169–176. The tract at residues 161–176 is 2 X 8 AA repeats of S-P-R-R-R-[PR]-S-Q; that stretch reads SPRRRRSQSPRRRRSQ. Residues 176–182 are RNA binding; sequence QSPASSC.

This sequence belongs to the orthohepadnavirus core antigen family. Homodimerizes, then multimerizes. Interacts with cytosol exposed regions of viral L glycoprotein present in the reticulum-to-Golgi compartment. Interacts with human FLNB. Phosphorylated form interacts with host importin alpha; this interaction depends on the exposure of the NLS, which itself depends upon genome maturation and/or phosphorylation of the capsid protein. Interacts with host NUP153. Phosphorylated by host SRPK1, SRPK2, and maybe protein kinase C or GAPDH. Phosphorylation is critical for pregenomic RNA packaging. Protein kinase C phosphorylation is stimulated by HBx protein and may play a role in transport of the viral genome to the nucleus at the late step during the viral replication cycle.

Its subcellular location is the virion. The protein resides in the host cytoplasm. Self assembles to form an icosahedral capsid. Most capsids appear to be large particles with an icosahedral symmetry of T=4 and consist of 240 copies of capsid protein, though a fraction forms smaller T=3 particles consisting of 180 capsid proteins. Entering capsids are transported along microtubules to the nucleus. Phosphorylation of the capsid is thought to induce exposure of nuclear localization signal in the C-terminal portion of the capsid protein that allows binding to the nuclear pore complex via the importin (karyopherin-) alpha and beta. Capsids are imported in intact form through the nuclear pore into the nuclear basket, where it probably binds NUP153. Only capsids that contain the mature viral genome can release the viral DNA and capsid protein into the nucleoplasm. Immature capsids get stuck in the basket. Capsids encapsulate the pre-genomic RNA and the P protein. Pre-genomic RNA is reverse-transcribed into DNA while the capsid is still in the cytoplasm. The capsid can then either be directed to the nucleus, providing more genomes for transcription, or bud through the endoplasmic reticulum to provide new virions. The chain is Capsid protein from Woolly monkey hepatitis B virus (isolate Louisville) (WMHBV).